Here is a 227-residue protein sequence, read N- to C-terminus: MHLDHAHTHDGPSAVSADAHRPDGTRRALRIGLGGPVGSGKTATVAALCRALRDAFSLAVVTNDIYTREDAEFLLREAVLPPERITAVETGACPHTAIRDDISANLEAVEDLEDEVGPLDLVLVESGGDNLTATFSKGLVDAQIFVIDVAGGDDIPRKGGPGVTTADLLVVNKTDLAPYVGSDLGRMAADAKAQRAELPVVFQSLRTEPGVAPVADWVRARLAAWAA.

A compositionally biased stretch (basic and acidic residues) spans 1–10 (MHLDHAHTHD). Positions 1–22 (MHLDHAHTHDGPSAVSADAHRP) are disordered. Residue 35–42 (GPVGSGKT) coordinates GTP.

It belongs to the SIMIBI class G3E GTPase family. UreG subfamily. Homodimer. UreD, UreF and UreG form a complex that acts as a GTP-hydrolysis-dependent molecular chaperone, activating the urease apoprotein by helping to assemble the nickel containing metallocenter of UreC. The UreE protein probably delivers the nickel.

The protein localises to the cytoplasm. Functionally, facilitates the functional incorporation of the urease nickel metallocenter. This process requires GTP hydrolysis, probably effectuated by UreG. This is Urease accessory protein UreG from Streptomyces avermitilis (strain ATCC 31267 / DSM 46492 / JCM 5070 / NBRC 14893 / NCIMB 12804 / NRRL 8165 / MA-4680).